A 1070-amino-acid chain; its full sequence is MLEGGNEEISTIPGFNQIQFEGFCRFIDQGLTEELYKFPKIEDTDQEIEFQLFVETYQLVEPLIKERDAVYESLTYSSELYVSAGLIWKTSRDMQEQTIFIGNIPLMNSLGTSIVNGIYRIVINQILQSPGIYYRSELDHNGISVYTGTIISDWGGRLELEIDRKARIWARVSRKQKISILVLLSAMGLNLREILENVCYPEIFLSFLKDKEKKKIKSKENAILEFYQQFACVGGDPVFSESLCKELQKKFFQQRCELGRIGRRNMNRRLNLDIPQNTTFLLPRDILAAADHLIGMKFGMGILDDMNHLKNKRIRSVADLLQDQFGLALVRLENMVRGTMCGAIRHKLIPTPQNLVTSTTLTTTYESFFGLHPLSQVLDRTNPLTQIVHGRKASYLGPGGLTGRTASFRIRDIHPSHYGRICPIDTSEGINVGLIGSLAIHARIGHWGSLESPFYEISERSKKVRMLYLSPSIDEYYMVAAGNSLALNRGSQEEQVVPARYRQEFLTIEWEQVHLRSIFPFQYFSIGASLIPFIEHNDANRALMSSNMQRQAVPLSRSEKCIVGTGLECQVALDSGVPTIAEHQGKIIYTDTEKIILSGNRDTLSIPLVIYQRSNKNTCMHQKPQVSRGKCIKKGQILADGAATVGGELALGKNVLVAYMPWEGYNSEDAVLINERLVYEDIYTSFHIRKYEIHTHVTSHGPERITNEIPHLEAHLLRNLDKNGIVMLGSWVETGDILVGKLTPQMAKESSYAPEDRLLRAILGIQISISKETCLKLPIGGRGRVIDVRWIQKKGGSSYNPETIRVYISQKREIKVGDKVAGRHGNKGIVSKILPRQDMPYLQDGRPVDMVFNPLGVPSRMNVGQIFECSLGLAGGLLDRHYRIAPFDERYEQEASRKLVFSELYEASKQTANPWVFEPEYPGKSRIFDGRTGDPFEQPVIIGKPYILKLIHQVDDKIHGRCSGHYALVTQQPLRGRAKQGGQRVGEMEVWALEGFGVAHILQEMLTYKSDHIRARQEVLGTTMVGGPIPKPEDAPESFRLLVRELRSLALELNHFLVSEKNFQINRKDV.

Belongs to the RNA polymerase beta chain family. In plastids the minimal PEP RNA polymerase catalytic core is composed of four subunits: alpha, beta, beta', and beta''. When a (nuclear-encoded) sigma factor is associated with the core the holoenzyme is formed, which can initiate transcription.

It localises to the plastid. It is found in the chloroplast. It carries out the reaction RNA(n) + a ribonucleoside 5'-triphosphate = RNA(n+1) + diphosphate. Functionally, DNA-dependent RNA polymerase catalyzes the transcription of DNA into RNA using the four ribonucleoside triphosphates as substrates. The protein is DNA-directed RNA polymerase subunit beta of Morus indica (Mulberry).